Reading from the N-terminus, the 118-residue chain is Myotrophin (118 aa).

An N-acetylcysteine modification is found at cysteine 2. The stretch at 2 to 30 (CDKEFMWALKNGDLDEVKDYVAKGEDVNR) is one ANK 1 repeat. Residues lysine 4, lysine 11, and lysine 24 each carry the N6-acetyllysine modification. Threonine 31 carries the post-translational modification Phosphothreonine. ANK repeat units follow at residues 34-66 (GGRKPLHYAADCGQLEILEFLLLKGADINAPDK) and 67-99 (HHITPLLSAVYEGHVSCVKLLLSKGADKTVKGP).

Belongs to the myotrophin family. As to quaternary structure, interacts with RELA. Interacts with the heterodimer formed by CAPZA1 and CAPZB.

The protein localises to the cytoplasm. The protein resides in the nucleus. It localises to the perinuclear region. Its function is as follows. Promotes dimerization of NF-kappa-B subunits and regulates NF-kappa-B transcription factor activity. Promotes growth of cardiomyocytes, but not cardiomyocyte proliferation. Promotes cardiac muscle hypertrophy. Plays a role in the regulation of the growth of actin filaments. Inhibits the activity of the F-actin-capping protein complex formed by the CAPZA1 and CAPZB heterodimer. The polypeptide is Myotrophin (MTPN) (Bos taurus (Bovine)).